A 282-amino-acid polypeptide reads, in one-letter code: MTSADYASRQRAIIAELNVASEFDAEAEIARRVEFLAQYLRSTGLRTYVLGISGGVDSSTAGRLAQLSVEKLRADGYDARFVAMRLPNGVQNDEADAQRALAFVRADEELTVNVKPAADAMLGALAASGHAFETPAQQDFVHGNIKARERMIAQYAVAGARRGIVIGTDHAAESLMGFFTKFGDGGADILPLAGLNKRRVRAVARALGGEELIVMKVPTADLEELRPLRPDEHAYGVSYDEIDDFLEGKPVADNVYETVLRFYDASRHKRALPYTMFDWPTA.

An ATP-binding site is contributed by 51–58; that stretch reads GISGGVDS. A Mg(2+)-binding site is contributed by Asp-57. Arg-148 lines the deamido-NAD(+) pocket. ATP is bound at residue Thr-168. Residue Glu-173 participates in Mg(2+) binding. Deamido-NAD(+)-binding residues include Lys-181 and Asp-188. ATP is bound by residues Lys-197 and Thr-219. 268–269 serves as a coordination point for deamido-NAD(+); it reads HK.

Belongs to the NAD synthetase family. In terms of assembly, homodimer.

It carries out the reaction deamido-NAD(+) + NH4(+) + ATP = AMP + diphosphate + NAD(+) + H(+). The protein operates within cofactor biosynthesis; NAD(+) biosynthesis; NAD(+) from deamido-NAD(+) (ammonia route): step 1/1. Its function is as follows. Catalyzes the ATP-dependent amidation of deamido-NAD to form NAD. Uses ammonia as a nitrogen source. In Burkholderia lata (strain ATCC 17760 / DSM 23089 / LMG 22485 / NCIMB 9086 / R18194 / 383), this protein is NH(3)-dependent NAD(+) synthetase.